The following is a 1531-amino-acid chain: Slit homolog 1 protein (1531 aa).

The first 33 residues, 1–33 (MALTPQRGSSSGLSRPELWLLLWAAAWRLGATA), serve as a signal peptide directing secretion. Positions 34–61 (CPALCTCTGTTVDCHGTGLQAIPKNIPR) constitute an LRRNT domain. LRR repeat units follow at residues 62 to 83 (NTER…DFAG), 86 to 107 (QLRV…AFDD), 110 to 131 (ELER…LFQN), 134 to 155 (ALSR…AFRG), 158 to 179 (DLKN…AFRA), and 182 to 203 (GLEV…SFNH). Asn72 carries N-linked (GlcNAc...) asparagine glycosylation. Residue Asn192 is glycosylated (N-linked (GlcNAc...) asparagine). The 51-residue stretch at 215–265 (NHLFCDCHLAWLSQWLRQRPTIGLFTQCSGPASLRGLNVAEVQKSEFSCSG) folds into the LRRCT 1 domain. In terms of domain architecture, LRRNT 2 spans 273–309 (PACTLSSGSCPAMCSCSNGIVDCRGKGLTAIPANLPE). The cysteines at positions 286 and 295 are disulfide-linked. LRR repeat units follow at residues 310-331 (TMTE…AFSP), 334-355 (KLRR…AFQG), 358-379 (SLNS…VFGG), 382-403 (TLQL…AFQD), and 406-427 (NLSL…TFTS). Asn406 carries N-linked (GlcNAc...) asparagine glycosylation. Residues 439 to 489 (NPFICDCNLKWLADFLRTNPIETTGARCASPRRLANKRIGQIKSKKFRCSA) enclose the LRRCT 2 domain. 4 cysteine pairs are disulfide-bonded: Cys443/Cys466, Cys445/Cys487, Cys513/Cys519, and Cys517/Cys526. The LRRNT 3 domain occupies 504 to 540 (NSECTSDVACPHKCRCEASVVECSGLKLSKIPERIPQ). LRR repeat units lie at residues 541–562 (STTE…GLFK), 566–587 (HLKK…TFEG), 590–611 (SVSE…MFRG), 614–635 (GLRT…SFTG), and 638–659 (NVRL…AFDT). An N-linked (GlcNAc...) asparagine glycan is attached at Asn571. Asn630 carries an N-linked (GlcNAc...) asparagine glycan. The LRRCT 3 domain occupies 671 to 721 (NPFNCNCQLAWLGDWLRKRKIVTGNPRCQNPDFLRQIPLQDVAFPDFRCEE). 2 disulfides stabilise this stretch: Cys675–Cys698 and Cys677–Cys719. One can recognise an LRRNT 4 domain in the interval 725-761 (EVGCLPRPQCPQECACLDTVVRCSNKHLQALPKGIPK). Asn762, Asn801, and Asn806 each carry an N-linked (GlcNAc...) asparagine glycan. LRR repeat units follow at residues 762 to 783 (NVTE…LSTF), 785 to 806 (YLQL…SFTN), 809 to 830 (QLTT…AFQG), and 833 to 854 (SLRL…IFAD). The LRRCT 4 domain occupies 866–916 (NPLYCDCHLRWLSSWVKTGYKEPGIARCAGPPEMEGKLLLTTPAKKFECQG). EGF-like domains are found at residues 927–962 (DPCL…RNCE), 964–1003 (SLDS…LTCG), 1005–1041 (NTDD…RACE), 1043–1081 (LVDF…DNCS), 1083–1119 (NQDD…QLCE), and 1124–1160 (PRNS…PECE). Intrachain disulfides connect Cys929–Cys940, Cys934–Cys950, Cys952–Cys961, Cys968–Cys979, Cys973–Cys991, Cys993–Cys1002, Cys1009–Cys1020, Cys1014–Cys1029, Cys1031–Cys1040, Cys1047–Cys1060, Cys1054–Cys1069, Cys1071–Cys1080, Cys1087–Cys1098, Cys1092–Cys1107, Cys1109–Cys1118, Cys1128–Cys1139, Cys1133–Cys1148, and Cys1150–Cys1159. Asn1026 carries an N-linked (GlcNAc...) asparagine glycan. Asn1079 is a glycosylation site (N-linked (GlcNAc...) asparagine). The region spanning 1163-1336 (LSVNFVDRDT…QMKPGVVPGC (174 aa)) is the Laminin G-like domain. 3 N-linked (GlcNAc...) asparagine glycosylation sites follow: Asn1186, Asn1256, and Asn1303. Cystine bridges form between Cys1310/Cys1336, Cys1339/Cys1349, Cys1344/Cys1359, Cys1361/Cys1370, Cys1378/Cys1388, Cys1383/Cys1398, Cys1400/Cys1409, Cys1419/Cys1429, Cys1424/Cys1439, Cys1441/Cys1450, Cys1456/Cys1495, Cys1474/Cys1509, Cys1485/Cys1525, and Cys1489/Cys1527. 3 consecutive EGF-like domains span residues 1337–1371 (EPCR…LHCD), 1374–1410 (VDGP…ALCN), and 1415–1451 (VAEP…ELCE). The CTCK domain occupies 1456-1531 (CRGDPVRDFH…PTKCGCAPCA (76 aa)).

As to quaternary structure, interacts with ROBO1 and GREM1. In terms of tissue distribution, in adult brains expressed in the hippocampus, cerebral cortex, and olfactory bulb but not in the cerebellum. In embryo expressed in cerebral cortex.

Its subcellular location is the secreted. Thought to act as molecular guidance cue in cellular migration, and function appears to be mediated by interaction with roundabout homolog receptors. During neural development involved in axonal navigation at the ventral midline of the neural tube and projection of axons to different regions. SLIT1 and SLIT2 together seem to be essential for midline guidance in the forebrain by acting as repulsive signal preventing inappropriate midline crossing by axons projecting from the olfactory bulb. The sequence is that of Slit homolog 1 protein (Slit1) from Rattus norvegicus (Rat).